Here is a 720-residue protein sequence, read N- to C-terminus: ATP-dependent RNA helicase glh-3 (720 aa).

Residues 1 to 11 are compositionally biased toward polar residues; the sequence is MDKSPTKTSIR. 2 disordered regions span residues 1 to 34 and 125 to 180; these read MDKSPTKTSIRTKFARHQPISDVDTTEQSSSCIK and LNSR…SYGN. Basic and acidic residues-rich tracts occupy residues 141–154 and 162–172; these read NVKENEGSIHRSDD and SAKDEERDRDS. 2 CCHC-type zinc fingers span residues 202 to 219 and 222 to 239; these read NTCFNCKKYGHRATECSA and RECANCGDPNHRANECAS. The Q motif motif lies at 298–326; the sequence is KSFSDSDIPQSMRRNVERAGYTRTTPIQQ. A Helicase ATP-binding domain is found at 329–513; sequence LPLVADGKDI…RKLLREDYTM (185 aa). 342–349 is an ATP binding site; the sequence is AQTGSGKT. Residues 456–459 carry the DEAD box motif; sequence DEAD. The 150-residue stretch at 549–698 folds into the Helicase C-terminal domain; the sequence is DIDTYTTEKN…VVPSWMKEAA (150 aa). A disordered region spans residues 696-720; the sequence is EAAGGTSNPNKFEKSIDTEEPEEAW.

Belongs to the DEAD box helicase family. DDX4/VASA subfamily. As to quaternary structure, interacts with csn-5. Interacts (via C-terminus) with kgb-1. Interacts with zyx-1.

It is found in the cytoplasm. The enzyme catalyses ATP + H2O = ADP + phosphate + H(+). Probable ATP-binding RNA helicase. This is ATP-dependent RNA helicase glh-3 from Caenorhabditis elegans.